A 50-amino-acid chain; its full sequence is Large ribosomal subunit protein eL39 (50 aa).

The protein belongs to the eukaryotic ribosomal protein eL39 family.

The sequence is that of Large ribosomal subunit protein eL39 (rpl39e) from Archaeoglobus fulgidus (strain ATCC 49558 / DSM 4304 / JCM 9628 / NBRC 100126 / VC-16).